A 38-amino-acid chain; its full sequence is Photosystem II reaction center protein M (38 aa).

Residues 7 to 27 form a helical membrane-spanning segment; it reads GFVASILFVLVPSVFLIILYI.

It belongs to the PsbM family. PSII is composed of 1 copy each of membrane proteins PsbA, PsbB, PsbC, PsbD, PsbE, PsbF, PsbH, PsbI, PsbJ, PsbK, PsbL, PsbM, PsbT, PsbX, PsbY, PsbZ, Psb30/Ycf12, peripheral proteins PsbO, CyanoQ (PsbQ), PsbU, PsbV and a large number of cofactors. It forms dimeric complexes.

The protein resides in the cellular thylakoid membrane. One of the components of the core complex of photosystem II (PSII). PSII is a light-driven water:plastoquinone oxidoreductase that uses light energy to abstract electrons from H(2)O, generating O(2) and a proton gradient subsequently used for ATP formation. It consists of a core antenna complex that captures photons, and an electron transfer chain that converts photonic excitation into a charge separation. This subunit is found at the monomer-monomer interface. This chain is Photosystem II reaction center protein M, found in Nostoc sp. (strain PCC 7120 / SAG 25.82 / UTEX 2576).